A 364-amino-acid chain; its full sequence is Ribosomal RNA large subunit methyltransferase M (364 aa).

S-adenosyl-L-methionine is bound by residues Ser194, 227 to 230 (CPGG), Asp246, Asp266, and Asp284. Residue Lys313 is the Proton acceptor of the active site.

Belongs to the class I-like SAM-binding methyltransferase superfamily. RNA methyltransferase RlmE family. RlmM subfamily. Monomer.

The protein localises to the cytoplasm. It carries out the reaction cytidine(2498) in 23S rRNA + S-adenosyl-L-methionine = 2'-O-methylcytidine(2498) in 23S rRNA + S-adenosyl-L-homocysteine + H(+). Its function is as follows. Catalyzes the 2'-O-methylation at nucleotide C2498 in 23S rRNA. The sequence is that of Ribosomal RNA large subunit methyltransferase M from Actinobacillus succinogenes (strain ATCC 55618 / DSM 22257 / CCUG 43843 / 130Z).